Consider the following 548-residue polypeptide: Glucose-6-phosphate isomerase (548 aa).

Catalysis depends on E355, which acts as the Proton donor. Residues H386 and K514 contribute to the active site.

It belongs to the GPI family.

The protein resides in the cytoplasm. The enzyme catalyses alpha-D-glucose 6-phosphate = beta-D-fructose 6-phosphate. The protein operates within carbohydrate biosynthesis; gluconeogenesis. It functions in the pathway carbohydrate degradation; glycolysis; D-glyceraldehyde 3-phosphate and glycerone phosphate from D-glucose: step 2/4. In terms of biological role, catalyzes the reversible isomerization of glucose-6-phosphate to fructose-6-phosphate. This chain is Glucose-6-phosphate isomerase, found in Yersinia enterocolitica serotype O:8 / biotype 1B (strain NCTC 13174 / 8081).